A 247-amino-acid chain; its full sequence is UPF0280 protein MmarC5_0355 (247 aa).

Belongs to the UPF0280 family.

The sequence is that of UPF0280 protein MmarC5_0355 from Methanococcus maripaludis (strain C5 / ATCC BAA-1333).